The chain runs to 352 residues: Serine protease 55 (352 aa).

An N-terminal signal peptide occupies residues 1 to 18; that stretch reads MLLFSVLLLLSLVTGTQL. The region spanning 68–300 is the Peptidase S1 domain; it reads ITGGMEAEVG…YNLWIEKVTQ (233 aa). The cysteines at positions 93 and 109 are disulfide-linked. Catalysis depends on charge relay system residues histidine 108 and aspartate 156. Cystine bridges form between cysteine 189–cysteine 256, cysteine 222–cysteine 235, and cysteine 246–cysteine 276. N-linked (GlcNAc...) asparagine glycosylation is present at asparagine 240. Serine 250 (charge relay system) is an active-site residue. Residues 308–330 are disordered; sequence AEKRRTSVKQKPMGSPVSGVPEP. Positions 319-330 are enriched in low complexity; the sequence is PMGSPVSGVPEP. Serine 325 is lipidated: GPI-anchor amidated serine. Positions 326–352 are cleaved as a propeptide — removed in mature form; it reads GVPEPGSPRSWLLLCPLSHVLFRAILY.

The protein belongs to the peptidase S1 family. As to expression, only detected in testis. Expressed in spermatogonia, spermatocytes, spermatids, Leydig and Sertoli cells. Expressed in prostate cancer and ovarian cancer (at protein level).

Its subcellular location is the cell membrane. The protein localises to the cytoplasm. The protein resides in the cytosol. In terms of biological role, probable serine protease, which plays a crucial role in the fertility of male mice including sperm migration and sperm-egg interaction. This chain is Serine protease 55 (PRSS55), found in Homo sapiens (Human).